A 96-amino-acid polypeptide reads, in one-letter code: Aspartyl/glutamyl-tRNA(Asn/Gln) amidotransferase subunit C (96 aa).

The protein belongs to the GatC family. Heterotrimer of A, B and C subunits.

It catalyses the reaction L-glutamyl-tRNA(Gln) + L-glutamine + ATP + H2O = L-glutaminyl-tRNA(Gln) + L-glutamate + ADP + phosphate + H(+). It carries out the reaction L-aspartyl-tRNA(Asn) + L-glutamine + ATP + H2O = L-asparaginyl-tRNA(Asn) + L-glutamate + ADP + phosphate + 2 H(+). Functionally, allows the formation of correctly charged Asn-tRNA(Asn) or Gln-tRNA(Gln) through the transamidation of misacylated Asp-tRNA(Asn) or Glu-tRNA(Gln) in organisms which lack either or both of asparaginyl-tRNA or glutaminyl-tRNA synthetases. The reaction takes place in the presence of glutamine and ATP through an activated phospho-Asp-tRNA(Asn) or phospho-Glu-tRNA(Gln). In Fusobacterium nucleatum subsp. nucleatum (strain ATCC 25586 / DSM 15643 / BCRC 10681 / CIP 101130 / JCM 8532 / KCTC 2640 / LMG 13131 / VPI 4355), this protein is Aspartyl/glutamyl-tRNA(Asn/Gln) amidotransferase subunit C.